The sequence spans 279 residues: MKALDKIREIVNKFSFNIREAQEIICHVLKIDKIQLYTENPEITSEQAHTIKSLIERRLKKEPLQYIIGECYFYNIKIKVGRGVLIPRPETEILVEQVLERQKLISNTGNRILDLCTGSGCIALAIGKNAPEFQIFGIDKSEKAVKYATENKALNNIKNVIFLVGDMFNPFKEKIFACITANPPYVKTDEISKLQPEIKNYEPLEALNGGEDGLNFYRKIIENAEKYLLNSGLIFLEIGQGQAKAVQNIALMSGFNVIEVVKDIAGIDRVMILQKSKSL.

S-adenosyl-L-methionine is bound by residues aspartate 139 and asparagine 182. Residue 182 to 185 (NPPY) coordinates substrate.

It belongs to the protein N5-glutamine methyltransferase family. PrmC subfamily.

The catalysed reaction is L-glutaminyl-[peptide chain release factor] + S-adenosyl-L-methionine = N(5)-methyl-L-glutaminyl-[peptide chain release factor] + S-adenosyl-L-homocysteine + H(+). In terms of biological role, methylates the class 1 translation termination release factors RF1/PrfA and RF2/PrfB on the glutamine residue of the universally conserved GGQ motif. The sequence is that of Release factor glutamine methyltransferase from Thermodesulfovibrio yellowstonii (strain ATCC 51303 / DSM 11347 / YP87).